The following is a 155-amino-acid chain: SsrA-binding protein (155 aa).

The protein belongs to the SmpB family.

Its subcellular location is the cytoplasm. Its function is as follows. Required for rescue of stalled ribosomes mediated by trans-translation. Binds to transfer-messenger RNA (tmRNA), required for stable association of tmRNA with ribosomes. tmRNA and SmpB together mimic tRNA shape, replacing the anticodon stem-loop with SmpB. tmRNA is encoded by the ssrA gene; the 2 termini fold to resemble tRNA(Ala) and it encodes a 'tag peptide', a short internal open reading frame. During trans-translation Ala-aminoacylated tmRNA acts like a tRNA, entering the A-site of stalled ribosomes, displacing the stalled mRNA. The ribosome then switches to translate the ORF on the tmRNA; the nascent peptide is terminated with the 'tag peptide' encoded by the tmRNA and targeted for degradation. The ribosome is freed to recommence translation, which seems to be the essential function of trans-translation. This is SsrA-binding protein from Streptococcus pyogenes serotype M5 (strain Manfredo).